The following is a 295-amino-acid chain: Acetylglutamate kinase (295 aa).

Substrate contacts are provided by residues 66–67 (GG), Arg-88, and Asn-193.

It belongs to the acetylglutamate kinase family. ArgB subfamily.

The protein localises to the cytoplasm. It carries out the reaction N-acetyl-L-glutamate + ATP = N-acetyl-L-glutamyl 5-phosphate + ADP. It participates in amino-acid biosynthesis; L-arginine biosynthesis; N(2)-acetyl-L-ornithine from L-glutamate: step 2/4. In terms of biological role, catalyzes the ATP-dependent phosphorylation of N-acetyl-L-glutamate. This chain is Acetylglutamate kinase, found in Rhizobium etli (strain ATCC 51251 / DSM 11541 / JCM 21823 / NBRC 15573 / CFN 42).